The primary structure comprises 292 residues: Homoserine kinase (292 aa).

80–90 (PLARGLGSSSS) serves as a coordination point for ATP.

This sequence belongs to the GHMP kinase family. Homoserine kinase subfamily.

Its subcellular location is the cytoplasm. The catalysed reaction is L-homoserine + ATP = O-phospho-L-homoserine + ADP + H(+). The protein operates within amino-acid biosynthesis; L-threonine biosynthesis; L-threonine from L-aspartate: step 4/5. Its function is as follows. Catalyzes the ATP-dependent phosphorylation of L-homoserine to L-homoserine phosphate. The protein is Homoserine kinase of Leuconostoc mesenteroides subsp. mesenteroides (strain ATCC 8293 / DSM 20343 / BCRC 11652 / CCM 1803 / JCM 6124 / NCDO 523 / NBRC 100496 / NCIMB 8023 / NCTC 12954 / NRRL B-1118 / 37Y).